The following is a 373-amino-acid chain: Chaperone protein DnaJ (373 aa).

Residues 5-69 (DYYEVLGVNK…NKRVNYDQFG (65 aa)) enclose the J domain. The CR-type zinc finger occupies 130-212 (GTKKEISIKK…CKGKGTENKT (83 aa)). Residues Cys-143, Cys-146, Cys-160, Cys-163, Cys-186, Cys-189, Cys-200, and Cys-203 each contribute to the Zn(2+) site. CXXCXGXG motif repeat units lie at residues 143–150 (CHTCNGDG), 160–167 (CSYCNGAG), 186–193 (CPKCEGSG), and 200–207 (CPTCKGKG).

It belongs to the DnaJ family. Homodimer. Zn(2+) serves as cofactor.

The protein localises to the cytoplasm. Its function is as follows. Participates actively in the response to hyperosmotic and heat shock by preventing the aggregation of stress-denatured proteins and by disaggregating proteins, also in an autonomous, DnaK-independent fashion. Unfolded proteins bind initially to DnaJ; upon interaction with the DnaJ-bound protein, DnaK hydrolyzes its bound ATP, resulting in the formation of a stable complex. GrpE releases ADP from DnaK; ATP binding to DnaK triggers the release of the substrate protein, thus completing the reaction cycle. Several rounds of ATP-dependent interactions between DnaJ, DnaK and GrpE are required for fully efficient folding. Also involved, together with DnaK and GrpE, in the DNA replication of plasmids through activation of initiation proteins. This Staphylococcus epidermidis (strain ATCC 35984 / DSM 28319 / BCRC 17069 / CCUG 31568 / BM 3577 / RP62A) protein is Chaperone protein DnaJ.